The following is a 245-amino-acid chain: Thioredoxin-like 1-2, chloroplastic (245 aa).

The transit peptide at 1-92 (MDAISSLGTN…TNHNMLEIQS (92 aa)) directs the protein to the chloroplast. Residues 93–194 (ANHLVDSLLN…FKKALDKHGS (102 aa)) form the Thioredoxin domain. Residues Cys117 and Cys120 each act as nucleophile in the active site. An intrachain disulfide couples Cys117 to Cys120.

This sequence belongs to the thioredoxin family.

It is found in the plastid. Its subcellular location is the chloroplast. Functionally, probable thiol-disulfide oxidoreductase that may participate in various redox reactions. The polypeptide is Thioredoxin-like 1-2, chloroplastic (Arabidopsis thaliana (Mouse-ear cress)).